The following is a 375-amino-acid chain: Anhydro-N-acetylmuramic acid kinase (375 aa).

14-21 (GTSMDGAD) serves as a coordination point for ATP.

Belongs to the anhydro-N-acetylmuramic acid kinase family.

It carries out the reaction 1,6-anhydro-N-acetyl-beta-muramate + ATP + H2O = N-acetyl-D-muramate 6-phosphate + ADP + H(+). It participates in amino-sugar metabolism; 1,6-anhydro-N-acetylmuramate degradation. It functions in the pathway cell wall biogenesis; peptidoglycan recycling. In terms of biological role, catalyzes the specific phosphorylation of 1,6-anhydro-N-acetylmuramic acid (anhMurNAc) with the simultaneous cleavage of the 1,6-anhydro ring, generating MurNAc-6-P. Is required for the utilization of anhMurNAc either imported from the medium or derived from its own cell wall murein, and thus plays a role in cell wall recycling. The protein is Anhydro-N-acetylmuramic acid kinase of Cupriavidus pinatubonensis (strain JMP 134 / LMG 1197) (Cupriavidus necator (strain JMP 134)).